Here is a 209-residue protein sequence, read N- to C-terminus: MASGQGPGPPKVGCDESPSPSEQQVAQDTEEVFRSYVFYLHQQEQETQGAAAPANPEMDNLPLEPNSILGQVGRQLALIGDDINRRYDTEFQNLLEQLQPTAGNAYELFTKIASSLFKSGISWGRVVALLGFGYRLALYVYQRGLTGFLGQVTCFLADIILHHYIARWIAQRGGWVAALNFRRDPILTVMVIFGVVLLGQFVVHRFFRS.

Residues 1-28 are disordered; sequence MASGQGPGPPKVGCDESPSPSEQQVAQD. Ala2 is subject to N-acetylalanine. Over residues 18–27 the composition is skewed to polar residues; it reads PSPSEQQVAQ. The short motif at 72–86 is the BH3 element; sequence VGRQLALIGDDINRR. The short motif at 115–134 is the BH1 element; sequence SLFKSGISWGRVVALLGFGY. 2 residues coordinate Zn(2+): Asp158 and His162. The short motif at 167–182 is the BH2 element; the sequence is RWIAQRGGWVAALNFR. Residues 186-203 form a helical membrane-spanning segment; sequence ILTVMVIFGVVLLGQFVV.

This sequence belongs to the Bcl-2 family. In terms of assembly, homodimer. Formation of the homodimer is zinc-dependent. Forms heterodimers with BCL2 and BCL2L1 isoform Bcl-X(L). Forms heterooligomers with BAX. Interacts with BCL2A1. Interacts withRTL10/BOP. Interacts with VDAC1. Interacts with GIMAP3/IAN4 and GIMAP5/IAN5. (Microbial infection) Interacts with gamma-herpesvirus 68 protein vBCL2. Widely expressed.

The protein localises to the mitochondrion outer membrane. In the presence of an appropriate stimulus, accelerates programmed cell death by binding to, and antagonizing the anti-apoptotic action of BCL2. This Mus musculus (Mouse) protein is Bcl-2 homologous antagonist/killer (Bak1).